Here is a 41-residue protein sequence, read N- to C-terminus: Large ribosomal subunit protein bL36 (41 aa).

The protein belongs to the bacterial ribosomal protein bL36 family.

In Neisseria gonorrhoeae (strain ATCC 700825 / FA 1090), this protein is Large ribosomal subunit protein bL36.